A 352-amino-acid polypeptide reads, in one-letter code: MAAQTLLELQPSNQSQLSALNTTSCDNAREAWDLLYQVLPIFILTICAFGLLGNLFVLSVFLLLRRRLTVAEIYLVNLAASDLVFVLGLPFWAQNIWNQFNWPFGDLLCRVVNGVIKANLFISIFLMVAISQDRYCVLVHPMASRRRRRRRRARATCMVIWAVGALLSTPTFLLRSVSAVQDLNISACILLLPHQAWHVARIVELNVLGFLLPLAAIIFFNGHILASLRGQGEVSQTRIGGPKDCKTTVLILTLVAAFLVCWAPYHCFAFLEFLFQVRAVRGCFWEDFIDLGLQLANFFAFTNSCLNPVIYVFVGRLFRTKVWELYQQCTPRRPAPLSSSRRKEILRRFWRN.

Residues 1 to 41 (MAAQTLLELQPSNQSQLSALNTTSCDNAREAWDLLYQVLPI) lie on the Extracellular side of the membrane. N-linked (GlcNAc...) asparagine glycosylation is found at asparagine 13 and asparagine 21. A helical transmembrane segment spans residues 42–62 (FILTICAFGLLGNLFVLSVFL). Over 63 to 72 (LLRRRLTVAE) the chain is Cytoplasmic. Residues 73 to 93 (IYLVNLAASDLVFVLGLPFWA) form a helical membrane-spanning segment. The Extracellular segment spans residues 94–110 (QNIWNQFNWPFGDLLCR). Cysteine 109 and cysteine 188 are disulfide-bonded. A helical transmembrane segment spans residues 111–131 (VVNGVIKANLFISIFLMVAIS). Over 132-153 (QDRYCVLVHPMASRRRRRRRRA) the chain is Cytoplasmic. Residues 154–174 (RATCMVIWAVGALLSTPTFLL) traverse the membrane as a helical segment. The Extracellular segment spans residues 175–206 (RSVSAVQDLNISACILLLPHQAWHVARIVELN). An N-linked (GlcNAc...) asparagine glycan is attached at asparagine 184. The chain crosses the membrane as a helical span at residues 207–227 (VLGFLLPLAAIIFFNGHILAS). Topologically, residues 228–250 (LRGQGEVSQTRIGGPKDCKTTVL) are cytoplasmic. A helical membrane pass occupies residues 251–271 (ILTLVAAFLVCWAPYHCFAFL). Topologically, residues 272 to 294 (EFLFQVRAVRGCFWEDFIDLGLQ) are extracellular. A helical transmembrane segment spans residues 295–315 (LANFFAFTNSCLNPVIYVFVG). At 316–326 (RLFRTKVWELY) the chain is on the cytoplasmic side. The S-palmitoyl cysteine moiety is linked to residue cysteine 329.

It belongs to the G-protein coupled receptor 1 family. Bradykinin receptor subfamily. BDKRB1 sub-subfamily.

Its subcellular location is the cell membrane. In terms of biological role, this is a receptor for bradykinin. Could be a factor in chronic pain and inflammation. The polypeptide is B1 bradykinin receptor (BDKRB1) (Tupaia minor (Pigmy tree shrew)).